Reading from the N-terminus, the 249-residue chain is Myelin protein P0 (249 aa).

An N-terminal signal peptide occupies residues 1–29 (MALGAIGDGRLLLLLVGLLSASGPSPTLA). The Ig-like V-type domain maps to 30–143 (IHVYTPREVY…DIVGKSSQVT (114 aa)). Residues 30–153 (IHVYTPREVY…LYVLEKVPTR (124 aa)) lie on the Extracellular side of the membrane. Cysteine 50 and cysteine 127 are disulfide-bonded. Asparagine 122 carries an N-linked (GlcNAc...) asparagine glycan. The chain crosses the membrane as a helical span at residues 154-179 (YGVVLGSIIGGVLLLVALLVAVVYLV). At 180–249 (RFCWLRRQAV…APGEARKDKK (70 aa)) the chain is on the cytoplasmic side. Positions 227–249 (RSAKAAAEKKSKGAPGEARKDKK) are disordered.

It belongs to the myelin P0 protein family. Found only in peripheral nervous system Schwann cells.

The protein localises to the cell membrane. Is an adhesion molecule necessary for normal myelination in the peripheral nervous system. It mediates adhesion between adjacent myelin wraps and ultimately drives myelin compaction. This Gallus gallus (Chicken) protein is Myelin protein P0 (MPZ).